A 653-amino-acid chain; its full sequence is 23S rRNA 5-hydroxycytidine C2501 synthase (653 aa).

It belongs to the peptidase U32 family. Interacts with precursors of the 50S ribosomal subunit.

Its activity is regulated as follows. Iron-sulfur clusters and prephenate are required for ho5C2501 formation. Responsible for the formation of the 5-hydroxycytidine modification at the C2501 position (ho5C2501) of 23S rRNA. May be a Fe-S protein that catalyzes ho5C2501 formation using prephenate as a hydroxyl group donor. The polypeptide is 23S rRNA 5-hydroxycytidine C2501 synthase (Escherichia coli (strain K12)).